The chain runs to 273 residues: Tyrosinase (273 aa).

Positions 38, 54, 63, 190, 194, and 216 each coordinate Cu cation.

The protein belongs to the tyrosinase family. Requires Cu(2+) as cofactor.

It carries out the reaction 2 L-dopa + O2 = 2 L-dopaquinone + 2 H2O. It catalyses the reaction L-tyrosine + O2 = L-dopaquinone + H2O. Functionally, this is a copper-containing oxidase that functions in the formation of pigments such as melanins and other polyphenolic compounds. The protein is Tyrosinase (melC2) of Streptomyces antibioticus.